A 265-amino-acid polypeptide reads, in one-letter code: MLLTIDVGNTHTVLGLFDGEEIVEHWRISTDARRTADELAVLLQGLMGMHPLLGMELGDGIEGIAICATVPSVLHELREVTRRYYGDVPAVLVEPGVKTGVPILMDNPKEVGADRIINAVAAVELYGGPAIVVDFGTATTFDAVSPRGEYTGGVIAPGIEISVEALGVKGAQLRKIELARPRSVIGKNTVEAMQSGIVYGFAGQVDGVVARMKKELAADPDDVTVIATGGLAPMVLGESSVIDEHEPWLTLIGLRLVYERNVSRA.

6-13 (DVGNTHTV) provides a ligand contact to ATP. 112-115 (GADR) is a binding site for substrate. The active-site Proton acceptor is the aspartate 114. Residue aspartate 134 participates in K(+) binding. An ATP-binding site is contributed by threonine 137. Threonine 189 serves as a coordination point for substrate.

Belongs to the type III pantothenate kinase family. In terms of assembly, homodimer. It depends on NH4(+) as a cofactor. Requires K(+) as cofactor.

Its subcellular location is the cytoplasm. The enzyme catalyses (R)-pantothenate + ATP = (R)-4'-phosphopantothenate + ADP + H(+). It functions in the pathway cofactor biosynthesis; coenzyme A biosynthesis; CoA from (R)-pantothenate: step 1/5. Its function is as follows. Catalyzes the phosphorylation of pantothenate (Pan), the first step in CoA biosynthesis. The sequence is that of Type III pantothenate kinase from Streptomyces griseus subsp. griseus (strain JCM 4626 / CBS 651.72 / NBRC 13350 / KCC S-0626 / ISP 5235).